The sequence spans 111 residues: Complement inhibitor CirpT1 (111 aa).

A signal peptide spans methionine 1–phenylalanine 19. 4 cysteine pairs are disulfide-bonded: cysteine 40–cysteine 64, cysteine 59–cysteine 98, cysteine 76–cysteine 99, and cysteine 85–cysteine 104.

This sequence belongs to the CirpT family. Expressed in salivary glands.

The protein resides in the secreted. In terms of biological role, complement inhibitor. Prevents complement-mediated activation of C5 by sterically preventing direct binding of C5 to its convertase (binding with domains MG4 and MG5). Binds C5 at a different binding site than the other tick complement inhibitors OmCI and RaCI3, and the drug eculizumab. Inhibits the complement in human, rat and guinea pig, and also shows a reduced inhibition in rabbit and pig. The polypeptide is Complement inhibitor CirpT1 (Rhipicephalus pulchellus (Yellow backed tick)).